A 465-amino-acid chain; its full sequence is ATP-dependent rRNA helicase rrp3 (465 aa).

A compositionally biased stretch (basic and acidic residues) spans 1-22; that stretch reads MAPSEKKLTEDKKNSSLNKKIE. Residues 1-44 are disordered; it reads MAPSEKKLTEDKKNSSLNKKIETSNSSSEKSSENNNGDSQNNEA. Positions 23-36 are enriched in low complexity; it reads TSNSSSEKSSENNN. Residues 46–74 carry the Q motif motif; that stretch reads KTFKELGVIDELCEACEKLGFKTPTPIQQ. Positions 77–248 constitute a Helicase ATP-binding domain; the sequence is IPVVLNKRDV…RASLHQPVRV (172 aa). ATP is bound at residue 90–97; the sequence is AQTGSGKT. The DEAD box signature appears at 196-199; the sequence is DEAD. A Helicase C-terminal domain is found at 275–419; it reads YLVYLVNELA…EYEIDKEGVF (145 aa). Basic residues predominate over residues 442–453; that stretch reads RRKSKGKLHTKR. The disordered stretch occupies residues 442-465; the sequence is RRKSKGKLHTKRKRDDLDREEQIY. The span at 454 to 465 shows a compositional bias: basic and acidic residues; that stretch reads KRDDLDREEQIY.

Belongs to the DEAD box helicase family. DDX47/RRP3 subfamily. Interacts with the SSU processome.

Its subcellular location is the nucleus. It catalyses the reaction ATP + H2O = ADP + phosphate + H(+). In terms of biological role, ATP-dependent rRNA helicase required for pre-ribosomal RNA processing. Involved in the maturation of the 35S-pre-rRNA and to its cleavage to mature 18S rRNA. The polypeptide is ATP-dependent rRNA helicase rrp3 (Schizosaccharomyces pombe (strain 972 / ATCC 24843) (Fission yeast)).